We begin with the raw amino-acid sequence, 448 residues long: Protein EVI2B (448 aa).

The first 21 residues, 1–21 (MDPKYFILILFCGHLNNTFFS), serve as a signal peptide directing secretion. Residues Asn-16 and Asn-50 are each glycosylated (N-linked (GlcNAc...) asparagine). At 22–202 (KTETITTEKQ…QTPQKNNYNS (181 aa)) the chain is on the extracellular side. Residues 74–108 (AKVTAGQPTPAVYTSSEKPEAHTSAGQPLAYNTKQ) form a disordered region. Residues 97 to 108 (SAGQPLAYNTKQ) show a composition bias toward polar residues. An N-linked (GlcNAc...) asparagine glycan is attached at Asn-114. Residues 203–226 (IAAILIGVLLTSMLVAIIIIVLWK) traverse the membrane as a helical segment. Residues 227-448 (CLRKPVLNDQ…SLPPPPAELL (222 aa)) lie on the Cytoplasmic side of the membrane. At Thr-249 the chain carries Phosphothreonine. Residues Ser-268, Ser-271, Ser-278, and Ser-294 each carry the phosphoserine modification. Disordered regions lie at residues 298–372 (IEDS…DSTS) and 427–448 (SIPPNSDQDLNESLPPPPAELL). Composition is skewed to polar residues over residues 313-333 (VNGTSEDSADGSTVGTAVSSS) and 350-372 (QESNQSDKPTMTIVSPLPNDSTS).

In terms of tissue distribution, bone marrow, peripheral blood mononuclear cells, fibroblasts and Epstein-Barr virus-transformed lymphoblastoid cell lines. Strongly expressed in granulocytic cells, and weakly on lymphocytes cells.

The protein localises to the membrane. Its function is as follows. Required for granulocyte differentiation and functionality of hematopoietic progenitor cells through the control of cell cycle progression and survival of hematopoietic progenitor cells. The chain is Protein EVI2B from Homo sapiens (Human).